Consider the following 249-residue polypeptide: Small ribosomal subunit protein uS5 (249 aa).

Residues 1–14 (MSAEAPKRQFGDRR) show a composition bias toward basic and acidic residues. Residues 1–29 (MSAEAPKRQFGDRRRGGRRGGRRDGEEKG) form a disordered region. Positions 71-134 (LKDDVMKIRS…VIAKLSIIPI (64 aa)) constitute an S5 DRBM domain.

This sequence belongs to the universal ribosomal protein uS5 family. Component of the small ribosomal subunit. Mature ribosomes consist of a small (40S) and a large (60S) subunit. The 40S subunit contains about 32 different proteins and 1 molecule of RNA (18S). The 60S subunit contains 45 different proteins and 3 molecules of RNA (25S, 5.8S and 5S).

Its subcellular location is the cytoplasm. In terms of biological role, component of the ribosome, a large ribonucleoprotein complex responsible for the synthesis of proteins in the cell. The small ribosomal subunit (SSU) binds messenger RNAs (mRNAs) and translates the encoded message by selecting cognate aminoacyl-transfer RNA (tRNA) molecules. The large subunit (LSU) contains the ribosomal catalytic site termed the peptidyl transferase center (PTC), which catalyzes the formation of peptide bonds, thereby polymerizing the amino acids delivered by tRNAs into a polypeptide chain. The nascent polypeptides leave the ribosome through a tunnel in the LSU and interact with protein factors that function in enzymatic processing, targeting, and the membrane insertion of nascent chains at the exit of the ribosomal tunnel. RPS2 is important for the assembly and function of the 40S ribosomal subunitand is nvolved in nucleolar processing of pre-18S ribosomal RNA and ribosome assembly. The sequence is that of Small ribosomal subunit protein uS5 (RPS21) from Candida albicans (strain SC5314 / ATCC MYA-2876) (Yeast).